Reading from the N-terminus, the 729-residue chain is Carbon monoxide dehydrogenase/acetyl-CoA synthase subunit alpha (729 aa).

Residues C506, C509, C518, and C528 each contribute to the [4Fe-4S] cluster site. C509 lines the Ni(2+) pocket. Ni(2+) is bound by residues C595, G596, and C597.

In terms of assembly, tetramer of two alpha and two beta chains. Requires Ni cation as cofactor. The cofactor is [4Fe-4S] cluster.

The catalysed reaction is Co(I)-[corrinoid Fe-S protein] + acetyl-CoA + H(+) = methyl-Co(III)-[corrinoid Fe-S protein] + CO + CoA. The beta subunit generates CO from CO(2), while the alpha subunit (this protein) combines the CO with CoA and a methyl group to form acetyl-CoA. The methyl group, which is incorporated into acetyl-CoA, is transferred to the alpha subunit by a corrinoid iron-sulfur protein. This chain is Carbon monoxide dehydrogenase/acetyl-CoA synthase subunit alpha, found in Moorella thermoacetica (Clostridium thermoaceticum).